A 63-amino-acid chain; its full sequence is Ct-IT2 (63 aa).

One can recognise an LCN-type CS-alpha/beta domain in the interval 1 to 63; sequence KDGYPMDSKG…VWDKATNKCG (63 aa). Intrachain disulfides connect C11–C62, C15–C36, C22–C43, and C26–C45. Glycine amide is present on G63.

As to expression, expressed by the venom gland.

It localises to the secreted. Functionally, beta toxins bind voltage-independently at site-4 of sodium channels (Nav) and shift the voltage of activation toward more negative potentials thereby affecting sodium channel activation and promoting spontaneous and repetitive firing. Is highly active on insects, since it provokes paralysis and death when injected into crickets. The polypeptide is Ct-IT2 (Centruroides tecomanus (Scorpion)).